The following is a 93-amino-acid chain: Small ribosomal subunit protein uS19 (93 aa).

Belongs to the universal ribosomal protein uS19 family.

In terms of biological role, protein S19 forms a complex with S13 that binds strongly to the 16S ribosomal RNA. The sequence is that of Small ribosomal subunit protein uS19 from Syntrophus aciditrophicus (strain SB).